A 329-amino-acid chain; its full sequence is DNA-directed RNA polymerase subunit alpha (329 aa).

The tract at residues Met1 to Glu233 is alpha N-terminal domain (alpha-NTD). The interval Thr266–Lys329 is alpha C-terminal domain (alpha-CTD).

This sequence belongs to the RNA polymerase alpha chain family. As to quaternary structure, in plastids the minimal PEP RNA polymerase catalytic core is composed of four subunits: alpha, beta, beta', and beta''. When a (nuclear-encoded) sigma factor is associated with the core the holoenzyme is formed, which can initiate transcription.

It localises to the plastid. Its subcellular location is the chloroplast. The enzyme catalyses RNA(n) + a ribonucleoside 5'-triphosphate = RNA(n+1) + diphosphate. In terms of biological role, DNA-dependent RNA polymerase catalyzes the transcription of DNA into RNA using the four ribonucleoside triphosphates as substrates. The sequence is that of DNA-directed RNA polymerase subunit alpha from Arabidopsis thaliana (Mouse-ear cress).